Consider the following 468-residue polypeptide: Hexokinase (468 aa).

A Hexokinase domain is found at 10–466; sequence AKQLAELEVV…SGKGAALIAD (457 aa). Positions 74 to 225 are hexokinase small subdomain; that stretch reads TGAEVGEAYA…NVPAVCKAIV (152 aa). 85-90 serves as a coordination point for ATP; it reads DFGGST. The segment at 163–189 is glucose-binding; sequence PVGFTFSFPCAQAALNSSFLIEWTKGF. Residues 226 to 455 form a hexokinase large subdomain region; that stretch reads NDTVGTLVSC…KNIHYCIADD (230 aa).

Belongs to the hexokinase family.

The enzyme catalyses a D-hexose + ATP = a D-hexose 6-phosphate + ADP + H(+). The catalysed reaction is D-mannose + ATP = D-mannose 6-phosphate + ADP + H(+). It carries out the reaction D-fructose + ATP = D-fructose 6-phosphate + ADP + H(+). It catalyses the reaction D-glucose + ATP = D-glucose 6-phosphate + ADP + H(+). The protein operates within carbohydrate metabolism; hexose metabolism. Its pathway is carbohydrate degradation; glycolysis; D-glyceraldehyde 3-phosphate and glycerone phosphate from D-glucose: step 1/4. Catalyzes the phosphorylation of various hexoses to hexose 6-phosphate. In Toxoplasma gondii, this protein is Hexokinase (HXK).